Consider the following 373-residue polypeptide: 3 beta-hydroxysteroid dehydrogenase/Delta 5--&gt;4-isomerase type 1 (373 aa).

NADP(+) contacts are provided by residues 10 to 15 (GAGGFL), Tyr155, and Lys159. Catalysis depends on Lys159, which acts as the Proton donor. Residues 288 to 308 (LSLMYWIGFLLEIVSFLLRPI) traverse the membrane as a helical segment.

It belongs to the 3-beta-HSD family. Placenta and skin. Predominantly expressed in mammary gland tissue.

The protein localises to the endoplasmic reticulum membrane. Its subcellular location is the mitochondrion membrane. The catalysed reaction is a 3beta-hydroxy-Delta(5)-steroid + NAD(+) = a 3-oxo-Delta(5)-steroid + NADH + H(+). It catalyses the reaction pregnenolone + NAD(+) = pregn-5-ene-3,20-dione + NADH + H(+). The enzyme catalyses 3beta-hydroxyandrost-5-en-17-one + NAD(+) = androst-5-ene-3,17-dione + NADH + H(+). It carries out the reaction androst-5-en-3beta,17beta-diol + NAD(+) = 17beta-hydroxy-androst-5-en-3-one + NADH + H(+). The catalysed reaction is a 3beta-hydroxysteroid + NADP(+) = a 3-oxosteroid + NADPH + H(+). It catalyses the reaction 5alpha-androstane-3beta,17beta-diol + NADP(+) = 17beta-hydroxy-5alpha-androstan-3-one + NADPH + H(+). The enzyme catalyses 3beta-hydroxy-5alpha-androstan-17-one + NADP(+) = 5alpha-androstan-3,17-dione + NADPH + H(+). It carries out the reaction a 3-oxo-Delta(5)-steroid = a 3-oxo-Delta(4)-steroid. The catalysed reaction is pregn-5-ene-3,20-dione = progesterone. It catalyses the reaction androst-5-ene-3,17-dione = androst-4-ene-3,17-dione. The enzyme catalyses 17beta-hydroxy-androst-5-en-3-one = testosterone. It carries out the reaction 5alpha-androstane-3beta,17beta-diol + NAD(+) = 17beta-hydroxy-5alpha-androstan-3-one + NADH + H(+). It functions in the pathway steroid hormone biosynthesis. It participates in steroid metabolism. In terms of biological role, a bifunctional enzyme responsible for the oxidation and isomerization of 3beta-hydroxy-Delta(5)-steroid precursors to 3-oxo-Delta(4)-steroids, an essential step in steroid hormone biosynthesis. Specifically catalyzes the conversion of pregnenolone to progesterone, 17alpha-hydroxypregnenolone to 17alpha-hydroxyprogesterone, dehydroepiandrosterone (DHEA) to 4-androstenedione, and androstenediol to testosterone. Additionally, catalyzes the interconversion between 3beta-hydroxy and 3-oxo-5alpha-androstane steroids controlling the bioavalability of the active forms. Specifically converts dihydrotestosterone to its inactive form 5alpha-androstanediol, that does not bind androgen receptor/AR. Also converts androstanedione, a precursor of testosterone and estrone, to epiandrosterone. Expected to use NAD(+) as preferred electron donor for the 3beta-hydroxy-steroid dehydrogenase activity and NADPH for the 3-ketosteroid reductase activity. This Homo sapiens (Human) protein is 3 beta-hydroxysteroid dehydrogenase/Delta 5--&gt;4-isomerase type 1.